The primary structure comprises 167 residues: Leptin (167 aa).

An N-terminal signal peptide occupies residues 1-21; sequence MYWRTLWGFLWLWPYLFYIQA. C117 and C167 are oxidised to a cystine.

This sequence belongs to the leptin family.

The protein resides in the secreted. Functionally, key player in the regulation of energy balance and body weight control. Once released into the circulation, has central and peripheral effects by binding LEPR, found in many tissues, which results in the activation of several major signaling pathways. In the hypothalamus, acts as an appetite-regulating factor that induces a decrease in food intake and an increase in energy consumption by inducing anorexinogenic factors and suppressing orexigenic neuropeptides, also regulates bone mass and secretion of hypothalamo-pituitary-adrenal hormones. In the periphery, increases basal metabolism, influences reproductive function, regulates pancreatic beta-cell function and insulin secretion, is pro-angiogenic for endothelial cell and affects innate and adaptive immunity. In the arcuate nucleus of the hypothalamus, activates by depolarization POMC neurons inducing FOS and SOCS3 expression to release anorexigenic peptides and inhibits by hyperpolarization NPY neurons inducing SOCS3 with a consequent reduction on release of orexigenic peptides. In addition to its known satiety inducing effect, has a modulatory role in nutrient absorption. In the intestine, reduces glucose absorption by enterocytes by activating PKC and leading to a sequential activation of p38, PI3K and ERK signaling pathways which exerts an inhibitory effect on glucose absorption. Acts as a growth factor on certain tissues, through the activation of different signaling pathways increases expression of genes involved in cell cycle regulation such as CCND1, via JAK2-STAT3 pathway, or VEGFA, via MAPK1/3 and PI3K-AKT1 pathways. May also play an apoptotic role via JAK2-STAT3 pathway and up-regulation of BIRC5 expression. Pro-angiogenic, has mitogenic activity on vascular endothelial cells and plays a role in matrix remodeling by regulating the expression of matrix metalloproteinases (MMPs) and tissue inhibitors of metalloproteinases (TIMPs). In innate immunity, modulates the activity and function of neutrophils by increasing chemotaxis and the secretion of oxygen radicals. Increases phagocytosis by macrophages and enhances secretion of pro-inflammatory mediators. Increases cytotoxic ability of NK cells. Plays a pro-inflammatory role, in synergy with IL1B, by inducing NOS2 which promotes the production of IL6, IL8 and Prostaglandin E2, through a signaling pathway that involves JAK2, PI3K, MAP2K1/MEK1 and MAPK14/p38. In adaptive immunity, promotes the switch of memory T-cells towards T helper-1 cell immune responses. Increases CD4(+)CD25(-) T-cell proliferation and reduces autophagy during TCR (T-cell receptor) stimulation, through MTOR signaling pathway activation and BCL2 up-regulation. In Macaca mulatta (Rhesus macaque), this protein is Leptin (LEP).